The chain runs to 270 residues: Shikimate dehydrogenase (NADP(+)) (270 aa).

Shikimate is bound by residues 14–16 and Thr-61; that span reads SLS. Lys-65 acts as the Proton acceptor in catalysis. An NADP(+)-binding site is contributed by Asp-77. 2 residues coordinate shikimate: Asn-86 and Asp-101. NADP(+) is bound by residues 125–129 and Ile-210; that span reads GNGGA. Tyr-212 contacts shikimate. Residue Gly-233 coordinates NADP(+).

The protein belongs to the shikimate dehydrogenase family. Homodimer.

It carries out the reaction shikimate + NADP(+) = 3-dehydroshikimate + NADPH + H(+). The protein operates within metabolic intermediate biosynthesis; chorismate biosynthesis; chorismate from D-erythrose 4-phosphate and phosphoenolpyruvate: step 4/7. Involved in the biosynthesis of the chorismate, which leads to the biosynthesis of aromatic amino acids. Catalyzes the reversible NADPH linked reduction of 3-dehydroshikimate (DHSA) to yield shikimate (SA). This chain is Shikimate dehydrogenase (NADP(+)), found in Clostridium beijerinckii (strain ATCC 51743 / NCIMB 8052) (Clostridium acetobutylicum).